The primary structure comprises 352 residues: Peptide chain release factor 1 (352 aa).

Gln233 carries the post-translational modification N5-methylglutamine. A disordered region spans residues 288-309 (NAKDRKEQVGSGDRSERIRTYN). Residues 289 to 306 (AKDRKEQVGSGDRSERIR) are compositionally biased toward basic and acidic residues.

This sequence belongs to the prokaryotic/mitochondrial release factor family. In terms of processing, methylated by PrmC. Methylation increases the termination efficiency of RF1.

It localises to the cytoplasm. Its function is as follows. Peptide chain release factor 1 directs the termination of translation in response to the peptide chain termination codons UAG and UAA. The sequence is that of Peptide chain release factor 1 from Helicobacter acinonychis (strain Sheeba).